Reading from the N-terminus, the 291-residue chain is 5-hydroxytryptamine receptor 1D (291 aa).

The chain crosses the membrane as a helical span at residues 30-54 (LCDIWLSSDITCCTASILHLCVIAL). The cysteines at positions 31 and 108 are disulfide-linked. Serotonin is bound by residues D38 and C42. The DRY motif; important for ligand-induced conformation changes motif lies at 55–57 (DRY). Residues 75–96 (AAAMIAIVWAISICISIPPLFW) traverse the membrane as a helical segment. The N-linked (GlcNAc...) asparagine glycan is linked to N111. 3 helical membrane-spanning segments follow: residues 115–138 (ISYT…ILYG), 221–246 (KTLG…VLPI), and 256–279 (ALFD…YTVF). Position 241 (S241) interacts with serotonin. The short motif at 272–276 (NPIIY) is the NPxxY motif; important for ligand-induced conformation changes and signaling element.

This sequence belongs to the G-protein coupled receptor 1 family. As to quaternary structure, homodimer. Heterodimer with HTR1B.

The protein localises to the cell membrane. G-protein coupled receptor for 5-hydroxytryptamine (serotonin). Also functions as a receptor for ergot alkaloid derivatives, various anxiolytic and antidepressant drugs and other psychoactive substances. Ligand binding causes a conformation change that triggers signaling via guanine nucleotide-binding proteins (G proteins) and modulates the activity of downstream effectors, such as adenylate cyclase. HTR1D is coupled to G(i)/G(o) G alpha proteins and mediates inhibitory neurotransmission by inhibiting adenylate cyclase activity. Regulates the release of 5-hydroxytryptamine in the brain, and thereby affects neural activity. May also play a role in regulating the release of other neurotransmitters. May play a role in vasoconstriction. The chain is 5-hydroxytryptamine receptor 1D (HTR1D) from Sus scrofa (Pig).